A 403-amino-acid polypeptide reads, in one-letter code: Putative F-box protein At5g41500 (403 aa).

Positions 2–47 (ATTISNLPRELIEEILSRVPLRAMKAMRLTCKSWNNLSKSESFMKM) constitute an F-box domain.

This is Putative F-box protein At5g41500 from Arabidopsis thaliana (Mouse-ear cress).